The primary structure comprises 240 residues: 4-hydroxy-tetrahydrodipicolinate reductase (240 aa).

Residues 79–81 (ATT) and 103–106 (SANM) contribute to the NAD(+) site. Histidine 135 functions as the Proton donor/acceptor in the catalytic mechanism. A (S)-2,3,4,5-tetrahydrodipicolinate-binding site is contributed by histidine 136. The active-site Proton donor is lysine 139. 145–146 (GT) is a binding site for (S)-2,3,4,5-tetrahydrodipicolinate.

This sequence belongs to the DapB family.

The protein localises to the cytoplasm. It catalyses the reaction (S)-2,3,4,5-tetrahydrodipicolinate + NAD(+) + H2O = (2S,4S)-4-hydroxy-2,3,4,5-tetrahydrodipicolinate + NADH + H(+). The enzyme catalyses (S)-2,3,4,5-tetrahydrodipicolinate + NADP(+) + H2O = (2S,4S)-4-hydroxy-2,3,4,5-tetrahydrodipicolinate + NADPH + H(+). It participates in amino-acid biosynthesis; L-lysine biosynthesis via DAP pathway; (S)-tetrahydrodipicolinate from L-aspartate: step 4/4. In terms of biological role, catalyzes the conversion of 4-hydroxy-tetrahydrodipicolinate (HTPA) to tetrahydrodipicolinate. The sequence is that of 4-hydroxy-tetrahydrodipicolinate reductase from Staphylococcus aureus (strain JH1).